The sequence spans 288 residues: Putative branched-chain-amino-acid aminotransferase (288 aa).

An N6-(pyridoxal phosphate)lysine modification is found at K146.

The protein belongs to the class-IV pyridoxal-phosphate-dependent aminotransferase family. It depends on pyridoxal 5'-phosphate as a cofactor.

It catalyses the reaction L-leucine + 2-oxoglutarate = 4-methyl-2-oxopentanoate + L-glutamate. The enzyme catalyses L-isoleucine + 2-oxoglutarate = (S)-3-methyl-2-oxopentanoate + L-glutamate. It carries out the reaction L-valine + 2-oxoglutarate = 3-methyl-2-oxobutanoate + L-glutamate. The protein operates within amino-acid biosynthesis; L-isoleucine biosynthesis; L-isoleucine from 2-oxobutanoate: step 4/4. Its pathway is amino-acid biosynthesis; L-leucine biosynthesis; L-leucine from 3-methyl-2-oxobutanoate: step 4/4. It functions in the pathway amino-acid biosynthesis; L-valine biosynthesis; L-valine from pyruvate: step 4/4. Functionally, acts on leucine, isoleucine and valine. This Methanocaldococcus jannaschii (strain ATCC 43067 / DSM 2661 / JAL-1 / JCM 10045 / NBRC 100440) (Methanococcus jannaschii) protein is Putative branched-chain-amino-acid aminotransferase (ilvE).